Consider the following 286-residue polypeptide: Flagellin FlaB2 (286 aa).

This sequence belongs to the bacterial flagellin family. The flagellum consists of an outer layer composed of repeating units of FlaA around a core that contains several antigenically related polypeptides. Interacts with FliW; a synthetic peptide of FlaB1 (residues 229-247) partially blocks binding of this protein to FliW.

It localises to the periplasmic flagellum. The protein resides in the periplasm. Its function is as follows. Component of the core of the flagella. The sequence is that of Flagellin FlaB2 from Treponema pallidum (strain Nichols).